A 213-amino-acid chain; its full sequence is Outer-membrane lipoprotein LolB (213 aa).

An N-terminal signal peptide occupies residues 1 to 24 (MNNLSYFTKTKLVWVILSLSLLSA). Residue Cys25 is the site of N-palmitoyl cysteine attachment. Cys25 is lipidated: S-diacylglycerol cysteine.

The protein belongs to the LolB family. As to quaternary structure, monomer.

It is found in the cell outer membrane. Functionally, plays a critical role in the incorporation of lipoproteins in the outer membrane after they are released by the LolA protein. The chain is Outer-membrane lipoprotein LolB from Shewanella woodyi (strain ATCC 51908 / MS32).